Consider the following 196-residue polypeptide: Dephospho-CoA kinase (196 aa).

Positions 5-196 (IIGLTGGIAT…QVDIALNFEL (192 aa)) constitute a DPCK domain. 13–18 (ATGKTT) contributes to the ATP binding site.

It belongs to the CoaE family.

Its subcellular location is the cytoplasm. It carries out the reaction 3'-dephospho-CoA + ATP = ADP + CoA + H(+). Its pathway is cofactor biosynthesis; coenzyme A biosynthesis; CoA from (R)-pantothenate: step 5/5. Functionally, catalyzes the phosphorylation of the 3'-hydroxyl group of dephosphocoenzyme A to form coenzyme A. This Nostoc sp. (strain PCC 7120 / SAG 25.82 / UTEX 2576) protein is Dephospho-CoA kinase.